A 243-amino-acid chain; its full sequence is Small ribosomal subunit protein eS4 (243 aa).

An S4 RNA-binding domain is found at 43-105 (IPLIYIVRDY…TGEHYRVLPN (63 aa)).

Belongs to the eukaryotic ribosomal protein eS4 family. As to quaternary structure, part of the 30S ribosomal subunit.

The protein is Small ribosomal subunit protein eS4 of Thermococcus kodakarensis (strain ATCC BAA-918 / JCM 12380 / KOD1) (Pyrococcus kodakaraensis (strain KOD1)).